A 149-amino-acid polypeptide reads, in one-letter code: Protegrin-4 (149 aa).

Positions 1–29 are cleaved as a signal peptide; that stretch reads METQRASLCLGRWSLWLLLLALVVPSASA. Residues 30–130 constitute a propeptide that is removed on maturation; it reads QALSYREAVL…DITCNEVQGV (101 aa). The disordered stretch occupies residues 61–80; it reads DQPPKADEDPGTPKPVSFTV. Cystine bridges form between cysteine 85–cysteine 96, cysteine 107–cysteine 124, cysteine 136–cysteine 145, and cysteine 138–cysteine 143. Arginine amide is present on arginine 148.

It belongs to the cathelicidin family.

The protein localises to the secreted. Functionally, microbicidal activity. This is Protegrin-4 (NPG4) from Sus scrofa (Pig).